Consider the following 410-residue polypeptide: Mannosyl phosphorylinositol ceramide synthase regulatory protein CSG2 (410 aa).

The signal sequence occupies residues 1–17 (MSTTLLWFSSVIGYVIQ). The Lumenal segment spans residues 18 to 50 (TKCLSNIQSKKEISVGPNGTIATPETNGDNGNS). 2 N-linked (GlcNAc...) asparagine glycosylation sites follow: asparagine 35 and asparagine 49. A helical transmembrane segment spans residues 51–71 (SSLTFYLTFMYFASWLLLVPA). The Cytoplasmic portion of the chain corresponds to 72–141 (SRLWEKMRPM…SVATFKYVAK (70 aa)). Residues 142 to 161 (LTVLALIMIVADLTYNMALS) form a helical membrane-spanning segment. The Lumenal portion of the chain corresponds to 162 to 167 (LSPAFD). Residues 168-187 (VALMQNTAIFEIVTLLYGVC) form a helical membrane-spanning segment. The Cytoplasmic portion of the chain corresponds to 188–197 (GISRKNYVFR). Residues 198–217 (NFLIMMNAVIGILIISYTKA) form a helical membrane-spanning segment. Residues 218–245 (TCDMLAGKLSVNPNTGELSDPFLFDRLK) are Lumenal-facing. Residues 246-265 (GALICGLGALIMGPFAVLWN) traverse the membrane as a helical segment. Residues 266–285 (RWFCSNISKNENSAVVLVKQ) lie on the Cytoplasmic side of the membrane. Residues 286–305 (STHMALIGIIGMVILLPFIP) traverse the membrane as a helical segment. The Lumenal segment spans residues 306–324 (KFPSRESVESISLFYNDKS). The helical transmembrane segment at 325-344 (FWFSLLGSIIFGSLPSLISI) threads the bilayer. The Cytoplasmic portion of the chain corresponds to 345 to 355 (LELNRKAPAEY). The helical transmembrane segment at 356–374 (LTTCNLGAIIFMGLAEWVC) threads the bilayer. The Lumenal segment spans residues 375-385 (EPTQTTIVRWE). The chain crosses the membrane as a helical span at residues 386–404 (VIGYIMLTVSLLVLSVTLG). At 405–410 (EGKYHH) the chain is on the cytoplasmic side.

Heterodimer of CSH1 and CSG2, and SUR1 and CSG2.

The protein resides in the endoplasmic reticulum membrane. Functionally, required for calcium regulation. May regulate calcium accumulation by a non-vacuole organelle. Also regulates the activity of CSH1 and SUR1 during mannosyl phosphorylinositol ceramide synthesis. In Saccharomyces cerevisiae (strain ATCC 204508 / S288c) (Baker's yeast), this protein is Mannosyl phosphorylinositol ceramide synthase regulatory protein CSG2 (CSG2).